Consider the following 130-residue polypeptide: Small ribosomal subunit protein uS8 (130 aa).

The protein belongs to the universal ribosomal protein uS8 family. As to quaternary structure, part of the 30S ribosomal subunit. Contacts proteins S5 and S12.

In terms of biological role, one of the primary rRNA binding proteins, it binds directly to 16S rRNA central domain where it helps coordinate assembly of the platform of the 30S subunit. The protein is Small ribosomal subunit protein uS8 of Yersinia pseudotuberculosis serotype O:1b (strain IP 31758).